The chain runs to 83 residues: Erabutoxin c (83 aa).

Positions 1–21 (MKTLLLTLVVVTIVCLDLGYT) are cleaved as a signal peptide. The tract at residues 24–38 (CFNHQSSQPQTTKTC) is loop I. Disulfide bonds link Cys-24-Cys-45, Cys-38-Cys-62, Cys-64-Cys-75, and Cys-76-Cys-81. A stretch between loop I and loop II region spans residues 39–44 (SPGESS). Residues 45–62 (CYHKQWSDFRGTIIERGC) are loop II. The segment at 64–75 (CPTVKPGINLSC) is loop III.

It belongs to the three-finger toxin family. Short-chain subfamily. Type I alpha-neurotoxin sub-subfamily. In terms of tissue distribution, expressed by the venom gland.

The protein resides in the secreted. Its function is as follows. Binds to muscle nicotinic acetylcholine receptor (nAChR) and inhibit acetylcholine from binding to the receptor, thereby impairing neuromuscular transmission. Binds to Torpedo marmorata nAChR (Kd=0.14 nM). This Laticauda semifasciata (Black-banded sea krait) protein is Erabutoxin c.